A 162-amino-acid chain; its full sequence is MHDSDKYFMKCAIFLAKISEMIGEVPVGAVLVFNNTIIGKGLNSSILNHDPTAHAEIKALRNGAKFLKNYRLLHTTLYVTLEPCIMCYGAIIHSRISRLVFGAKYKNLQKYICCKNHFFINKNFRKISITQEVLESECSNLLSSFFKRKRKIATKYFNNNII.

A CMP/dCMP-type deaminase domain is found at 3 to 115; that stretch reads DSDKYFMKCA…KNLQKYICCK (113 aa). Residue His54 participates in Zn(2+) binding. Residue Glu56 is the Proton donor of the active site. 2 residues coordinate Zn(2+): Cys84 and Cys87.

The protein belongs to the cytidine and deoxycytidylate deaminase family. In terms of assembly, homodimer. Zn(2+) is required as a cofactor.

The enzyme catalyses adenosine(34) in tRNA + H2O + H(+) = inosine(34) in tRNA + NH4(+). Catalyzes the deamination of adenosine to inosine at the wobble position 34 of tRNA(Arg2). The protein is tRNA-specific adenosine deaminase of Buchnera aphidicola subsp. Baizongia pistaciae (strain Bp).